A 361-amino-acid polypeptide reads, in one-letter code: uncharacterized protein (361 aa).

Disordered stretches follow at residues 53–75 and 150–211; these read KNIS…NINN and NYNN…YHHY. Positions 150 to 198 are enriched in low complexity; it reads NYNNYNNNNNNNNNNNNNNNNNNNNNNNNNNNNNNKNNNKNNNNKPNNF. A compositionally biased stretch (basic residues) spans 199-211; it reads IHHHHHHHHYHHY. Residues 225–245 traverse the membrane as a helical segment; the sequence is IFIGLMAFLILFILMVIGLLI.

The protein resides in the membrane. This is an uncharacterized protein from Dictyostelium discoideum (Social amoeba).